A 362-amino-acid chain; its full sequence is Oxygen-dependent coproporphyrinogen-III oxidase (362 aa).

Residue Ser118 coordinates substrate. Positions 122 and 132 each coordinate a divalent metal cation. His132 serves as the catalytic Proton donor. 134–136 (NYR) lines the substrate pocket. A divalent metal cation is bound by residues His166 and His196. Residues 286 to 321 (YVEFNLVWDRGTIFGLQTNGRTESILMSLPPLVRWE) form an important for dimerization region.

The protein belongs to the aerobic coproporphyrinogen-III oxidase family. As to quaternary structure, homodimer. A divalent metal cation is required as a cofactor.

The protein resides in the cytoplasm. The catalysed reaction is coproporphyrinogen III + O2 + 2 H(+) = protoporphyrinogen IX + 2 CO2 + 2 H2O. Its pathway is porphyrin-containing compound metabolism; protoporphyrin-IX biosynthesis; protoporphyrinogen-IX from coproporphyrinogen-III (O2 route): step 1/1. Functionally, involved in the heme and chlorophyll biosynthesis. Catalyzes the aerobic oxidative decarboxylation of propionate groups of rings A and B of coproporphyrinogen-III to yield the vinyl groups in protoporphyrinogen-IX. The chain is Oxygen-dependent coproporphyrinogen-III oxidase from Synechococcus sp. (strain CC9605).